A 199-amino-acid polypeptide reads, in one-letter code: Adenylyl-sulfate kinase (199 aa).

The disordered stretch occupies residues 1–21; that stretch reads MSQSSNITWHDSEVTKSDRQQ. Basic and acidic residues predominate over residues 10–19; it reads HDSEVTKSDR. 34–41 serves as a coordination point for ATP; the sequence is GLSGSGKS. Residue serine 108 is the Phosphoserine intermediate of the active site.

Belongs to the APS kinase family.

The enzyme catalyses adenosine 5'-phosphosulfate + ATP = 3'-phosphoadenylyl sulfate + ADP + H(+). It participates in sulfur metabolism; hydrogen sulfide biosynthesis; sulfite from sulfate: step 2/3. In terms of biological role, catalyzes the synthesis of activated sulfate. This chain is Adenylyl-sulfate kinase, found in Staphylococcus haemolyticus (strain JCSC1435).